The following is a 567-amino-acid chain: Urease subunit alpha (567 aa).

The Urease domain occupies 130 to 567 (GGIDTHIHFI…LPLAQRYFLF (438 aa)). Residues His135, His137, and Lys218 each contribute to the Ni(2+) site. An N6-carboxylysine modification is found at Lys218. His220 is a binding site for substrate. The Ni(2+) site is built by His247 and His273. The active-site Proton donor is the His321. Asp361 contributes to the Ni(2+) binding site.

It belongs to the metallo-dependent hydrolases superfamily. Urease alpha subunit family. As to quaternary structure, heterotrimer of UreA (gamma), UreB (beta) and UreC (alpha) subunits. Three heterotrimers associate to form the active enzyme. Requires Ni cation as cofactor. Carboxylation allows a single lysine to coordinate two nickel ions.

It is found in the cytoplasm. It carries out the reaction urea + 2 H2O + H(+) = hydrogencarbonate + 2 NH4(+). It participates in nitrogen metabolism; urea degradation; CO(2) and NH(3) from urea (urease route): step 1/1. This is Urease subunit alpha from Methylobacillus flagellatus (strain ATCC 51484 / DSM 6875 / VKM B-1610 / KT).